A 215-amino-acid chain; its full sequence is Adenylate kinase (215 aa).

10-15 (GAGKGT) contributes to the ATP binding site. Positions 30–59 (STGDILRANVREGTELGLAAKEYMDKGELV) are NMP. AMP-binding positions include Thr-31, Arg-36, 57-59 (ELV), 85-88 (GYPR), and Gln-92. Residues 126–162 (GRLMCNCGASYHRTFNPPKKDDVCDICGGKVFQRADD) form an LID region. An ATP-binding site is contributed by Arg-127. Positions 130 and 132 each coordinate Zn(2+). 135–136 (SY) contributes to the ATP binding site. Zn(2+) is bound by residues Cys-149 and Cys-152. AMP is bound by residues Arg-159 and Arg-170. Lys-198 lines the ATP pocket.

It belongs to the adenylate kinase family. In terms of assembly, monomer.

It localises to the cytoplasm. It carries out the reaction AMP + ATP = 2 ADP. The protein operates within purine metabolism; AMP biosynthesis via salvage pathway; AMP from ADP: step 1/1. Its function is as follows. Catalyzes the reversible transfer of the terminal phosphate group between ATP and AMP. Plays an important role in cellular energy homeostasis and in adenine nucleotide metabolism. The sequence is that of Adenylate kinase from Methanosarcina barkeri (strain Fusaro / DSM 804).